The chain runs to 241 residues: Neuromodulin (241 aa).

Basic and acidic residues predominate over residues 1 to 26 (TKQVEKNEDGDQKIEQDGIKPEDKAH). Residues 1–241 (TKQVEKNEDG…EESKADQENA (241 aa)) form a disordered region. The IQ domain occupies 25–54 (AHKAATKIQASFRGHITRKKLKGEKKGDAP). Composition is skewed to low complexity over residues 80–95 (APAA…AQQE) and 118–131 (SEQP…PAAS). Composition is skewed to basic and acidic residues over residues 132–147 (SEEK…REST) and 159–171 (KADE…EPKQ). Residues 172–198 (ADVPAADTTATTTPAAEDATAKATAQP) show a composition bias toward low complexity. Composition is skewed to basic and acidic residues over residues 208–220 (TEEK…ETKP) and 232–241 (EESKADQENA).

This sequence belongs to the neuromodulin family. As to quaternary structure, binds calmodulin with a greater affinity in the absence of Ca(2+) than in its presence. Palmitoylated. Palmitoylation is essential for plasma membrane association.

It localises to the cell membrane. Its subcellular location is the cell projection. The protein resides in the growth cone membrane. The protein localises to the synapse. It is found in the filopodium membrane. Its function is as follows. This protein is associated with nerve growth. It is a major component of the motile 'growth cones' that form the tips of elongating axons. Plays a role in axonal and dendritic filopodia induction. This is Neuromodulin (GAP43) from Serinus canaria (Island canary).